Consider the following 780-residue polypeptide: Subtilisin-like protease SBT1.3 (780 aa).

Positions 1–25 are cleaved as a signal peptide; sequence MANKNPLQKPFLFIILSINLIFLQA. A propeptide spans 26–120 (activation peptide); that stretch reads ETTTQISTKK…VIPETRYELH (95 aa). An Inhibitor I9 domain is found at 36–120; that stretch reads TYVIHMDKSA…VIPETRYELH (85 aa). The Peptidase S8 domain occupies 116-628; it reads RYELHTTRSP…AGHIDPLRAT (513 aa). Asp-154 serves as the catalytic Charge relay system. Asn-165 is a glycosylation site (N-linked (GlcNAc...) asparagine). The active-site Charge relay system is His-227. Positions 384–477 constitute a PA domain; it reads KQYPLVYLGR…GEKEGKLIKQ (94 aa). The N-linked (GlcNAc...) asparagine glycan is linked to Asn-394. Ser-560 serves as the catalytic Charge relay system. N-linked (GlcNAc...) asparagine glycans are attached at residues Asn-663 and Asn-731.

Belongs to the peptidase S8 family.

Its subcellular location is the secreted. This chain is Subtilisin-like protease SBT1.3, found in Arabidopsis thaliana (Mouse-ear cress).